Reading from the N-terminus, the 122-residue chain is Large ribosomal subunit protein uL14 (122 aa).

It belongs to the universal ribosomal protein uL14 family. Part of the 50S ribosomal subunit. Forms a cluster with proteins L3 and L19. In the 70S ribosome, L14 and L19 interact and together make contacts with the 16S rRNA in bridges B5 and B8.

Its function is as follows. Binds to 23S rRNA. Forms part of two intersubunit bridges in the 70S ribosome. This Caldicellulosiruptor saccharolyticus (strain ATCC 43494 / DSM 8903 / Tp8T 6331) protein is Large ribosomal subunit protein uL14.